The chain runs to 301 residues: Protein FdhE homolog (301 aa).

This sequence belongs to the FdhE family.

The protein resides in the cytoplasm. Necessary for formate dehydrogenase activity. In Shewanella baltica (strain OS195), this protein is Protein FdhE homolog.